A 1338-amino-acid polypeptide reads, in one-letter code: Insulin receptor substrate 2 (1338 aa).

The span at Met-1–Pro-12 shows a compositional bias: pro residues. 2 disordered regions span residues Met-1–Val-31 and Val-49–Arg-72. The 129-residue stretch at Asp-16 to Ser-144 folds into the PH domain. Residues Asn-19–Asn-28 are compositionally biased toward low complexity. Residues Pro-53–Ser-66 show a composition bias toward gly residues. In terms of domain architecture, IRS-type PTB spans Tyr-194–Phe-298. The disordered stretch occupies residues Arg-303–Gly-411. Ser-306 and Ser-346 each carry phosphoserine. At Thr-350 the chain carries Phosphothreonine. A phosphoserine mark is found at Ser-365, Ser-384, Ser-388, and Ser-391. Residue Arg-412 is modified to Omega-N-methylarginine. The interval Ser-428 to Gly-537 is disordered. Residues Ser-444–Gly-453 are compositionally biased toward low complexity. Over residues Tyr-459–His-471 the composition is skewed to pro residues. A compositionally biased stretch (low complexity) spans His-475–Ser-493. Residue Thr-520 is modified to Phosphothreonine. At Ser-523 the chain carries Phosphoserine. Thr-527 is modified (phosphothreonine). Tyr-540 is modified (phosphotyrosine; by INSR). The short motif at Tyr-540–Met-543 is the YXXM motif 1 element. Ser-560 bears the Phosphoserine; by PLK1 mark. A Phosphoserine modification is found at Ser-577. Phosphothreonine occurs at positions 579 and 580. Ser-594 is modified (phosphoserine). The YXXM motif 2 motif lies at Tyr-598 to Met-601. Phosphoserine occurs at positions 608 and 620. Residues Tyr-653 and Tyr-675 each carry the phosphotyrosine; by INSR modification. 2 consecutive short sequence motifs (YXXM motif) follow at residues Tyr-653–Met-656 and Tyr-675–Met-678. Residues Ser-679 and Ser-682 each carry the phosphoserine modification. Residues Pro-703–Thr-719 show a composition bias toward low complexity. The disordered stretch occupies residues Pro-703–Asp-739. Phosphoserine is present on residues Ser-735 and Ser-736. The YXXM motif 5 motif lies at Tyr-742–Met-745. Ser-770 is subject to Phosphoserine. Position 779 is a phosphothreonine (Thr-779). Residue Ser-805 is modified to Phosphoserine. The short motif at Tyr-823 to Met-826 is the YXXM motif 6 element. At Ser-828 the chain carries Phosphoserine. The tract at residues Glu-840–Pro-1101 is disordered. Residues Thr-859 to Val-870 show a composition bias toward pro residues. Phosphoserine is present on Ser-915. At Tyr-919 the chain carries Phosphotyrosine; by INSR. Residues Leu-938–Ser-967 show a composition bias toward low complexity. Position 973 is a phosphoserine (Ser-973). The residue at position 978 (Tyr-978) is a Phosphotyrosine; by INSR. The span at Pro-1013 to Ser-1022 shows a compositional bias: pro residues. Positions Tyr-1072–Met-1075 match the YXXM motif 7 motif. The residue at position 1082 (Thr-1082) is a Phosphothreonine. The segment covering Pro-1083 to Pro-1093 has biased composition (pro residues). Ser-1100 carries the post-translational modification Phosphoserine. Ser-1109 carries the post-translational modification Phosphoserine; by PLK1. A disordered region spans residues Leu-1121–Ala-1296. The segment covering Glu-1150–Phe-1165 has biased composition (low complexity). Thr-1159 is modified (phosphothreonine). A phosphoserine mark is found at Ser-1162, Ser-1174, Ser-1176, and Ser-1186. Over residues Ser-1174–Arg-1183 the composition is skewed to polar residues. Positions Gly-1188–Asp-1198 are enriched in gly residues. Residue Ser-1203 is modified to Phosphoserine. The segment covering Gln-1224–Gly-1236 has biased composition (gly residues). Position 1253 is a phosphotyrosine; by INSR (Tyr-1253). The segment covering Gly-1263–Gln-1277 has biased composition (pro residues). Residue Lys-1331 forms a Glycyl lysine isopeptide (Lys-Gly) (interchain with G-Cter in ubiquitin) linkage.

In terms of assembly, interacts with PHIP. Interacts with SH2B1; this interaction enhances leptin-induced activation of the PI3-kinase pathway. Interacts with GRB2. Interacts with PIK3R1. Interacts with DVL2; this interaction promotes the Wnt/beta-catenin signaling pathway. Phosphorylation fluctuates in a cell-cycle dependent manner with hyperphosphorylation during mitosis. Phosphorylated at Ser-560 and Ser-1109 by PLK1; these phosphorylations prevent the activation of the PI3K pathway upon growth factor stimulation by inhibiting the binding between IRS2 and the PI3K pathway components and increasing the level of IRS2 protein degradation. In addition, they prevent premature mitotic exit. In terms of processing, monoubiquitinated by NEDD4; leading to enhanced IGF1 signaling. During cell cycle, ubiquitination and proteasomal degradation are controlled by FZR1.

Its subcellular location is the cytoplasm. It localises to the cytosol. Signaling adapter protein that participates in the signal transduction from two prominent receptor tyrosine kinases, insulin receptor/INSR and insulin-like growth factor I receptor/IGF1R. Plays therefore an important role in development, growth, glucose homeostasis as well as lipid metabolism. Upon phosphorylation by the insulin receptor, functions as a signaling scaffold that propagates insulin action through binding to SH2 domain-containing proteins including the p85 regulatory subunit of PI3K, NCK1, NCK2, GRB2 or SHP2. Recruitment of GRB2 leads to the activation of the guanine nucleotide exchange factor SOS1 which in turn triggers the Ras/Raf/MEK/MAPK signaling cascade. Activation of the PI3K/AKT pathway is responsible for most of insulin metabolic effects in the cell, and the Ras/Raf/MEK/MAPK is involved in the regulation of gene expression and in cooperation with the PI3K pathway regulates cell growth and differentiation. Acts a positive regulator of the Wnt/beta-catenin signaling pathway through suppression of DVL2 autophagy-mediated degradation leading to cell proliferation. Plays a role in cell cycle progression by promoting a robust spindle assembly checkpoint (SAC) during M-phase. In macrophages, IL4-induced tyrosine phosphorylation of IRS2 leads to the recruitment and activation of phosphoinositide 3-kinase (PI3K). In Homo sapiens (Human), this protein is Insulin receptor substrate 2 (IRS2).